The primary structure comprises 631 residues: Probable potassium transport system protein Kup (631 aa).

12 consecutive transmembrane segments (helical) span residues 17–37 (IGLL…SPLY), 56–76 (ILGV…FKYM), 109–129 (MMMV…SMIT), 147–167 (GLDH…FLIQ), 174–194 (IGVL…ALGV), 215–235 (FFII…LALT), 256–276 (WFIL…ALVL), 288–308 (LLAP…ATII), 346–366 (IYIG…VIGF), 378–398 (VAVT…MLML), 403–423 (PLLA…FFAA), and 428–448 (IFQG…LMTT).

The protein belongs to the HAK/KUP transporter (TC 2.A.72) family.

It localises to the cell inner membrane. The enzyme catalyses K(+)(in) + H(+)(in) = K(+)(out) + H(+)(out). Transport of potassium into the cell. Likely operates as a K(+):H(+) symporter. This chain is Probable potassium transport system protein Kup, found in Pseudomonas syringae pv. tomato (strain ATCC BAA-871 / DC3000).